The sequence spans 258 residues: MLDKVKNVIIVLSGKGGVGKSTVSTQLALALRHSGHKVGLLDIDLCGPSVPFLLGLEGSNIYQCDEGWVPIYTDASKTLAVMSIGFLLKNRTDPVIWRGPKKTMMIRQFLTDVKWEELDYLIIDTPPGTSDEHITVMECMREVPCNGAIIVTTPQSVALDDVRKEITFCKKTGIKLLGIVENMSGFVCPNCTNCTNIFSSNGGVELAHLVQIPHLGTLPIDPRVGVLAGSTASVLDELPDSPTAQVLRGIVQHLVALT.

14–21 is an ATP binding site; sequence GKGGVGKS. [4Fe-4S] cluster contacts are provided by C188 and C191.

Belongs to the Mrp/NBP35 ATP-binding proteins family. NUBP2/CFD1 subfamily. In terms of assembly, heterotetramer of 2 Nubp1 and 2 Nubp2 chains. [4Fe-4S] cluster is required as a cofactor.

It localises to the cytoplasm. Component of the cytosolic iron-sulfur (Fe/S) protein assembly (CIA) machinery. Required for maturation of extramitochondrial Fe-S proteins. The Nubp1-Nubp2 heterotetramer forms a Fe-S scaffold complex, mediating the de novo assembly of an Fe-S cluster and its transfer to target apoproteins. In Drosophila pseudoobscura pseudoobscura (Fruit fly), this protein is Cytosolic Fe-S cluster assembly factor Nubp2 homolog.